The chain runs to 147 residues: Large ribosomal subunit protein uL11 (147 aa).

This sequence belongs to the universal ribosomal protein uL11 family. As to quaternary structure, part of the ribosomal stalk of the 50S ribosomal subunit. Interacts with L10 and the large rRNA to form the base of the stalk. L10 forms an elongated spine to which L12 dimers bind in a sequential fashion forming a multimeric L10(L12)X complex. Post-translationally, one or more lysine residues are methylated.

Forms part of the ribosomal stalk which helps the ribosome interact with GTP-bound translation factors. The sequence is that of Large ribosomal subunit protein uL11 from Corynebacterium aurimucosum (strain ATCC 700975 / DSM 44827 / CIP 107346 / CN-1) (Corynebacterium nigricans).